A 306-amino-acid polypeptide reads, in one-letter code: tRNA dimethylallyltransferase (306 aa).

12–19 (GPTAAGKT) lines the ATP pocket. 14–19 (TAAGKT) contributes to the substrate binding site. Interaction with substrate tRNA stretches follow at residues 37–40 (DSAL), 161–165 (QRINR), and 242–247 (RCVGYR).

This sequence belongs to the IPP transferase family. Monomer. Mg(2+) is required as a cofactor.

The enzyme catalyses adenosine(37) in tRNA + dimethylallyl diphosphate = N(6)-dimethylallyladenosine(37) in tRNA + diphosphate. Functionally, catalyzes the transfer of a dimethylallyl group onto the adenine at position 37 in tRNAs that read codons beginning with uridine, leading to the formation of N6-(dimethylallyl)adenosine (i(6)A). The polypeptide is tRNA dimethylallyltransferase (Pseudoalteromonas translucida (strain TAC 125)).